A 758-amino-acid polypeptide reads, in one-letter code: 5-methyltetrahydropteroyltriglutamate--homocysteine methyltransferase (758 aa).

5-methyltetrahydropteroyltri-L-glutamate is bound by residues 17–20 and Lys117; that span reads RELK. Residues 434-436 and Glu487 each bind L-homocysteine; that span reads IGS. Residues 434 to 436 and Glu487 contribute to the L-methionine site; that span reads IGS. 5-methyltetrahydropteroyltri-L-glutamate contacts are provided by residues 518 to 519 and Trp564; that span reads RC. An L-homocysteine-binding site is contributed by Asp602. Position 602 (Asp602) interacts with L-methionine. Residue Glu608 participates in 5-methyltetrahydropteroyltri-L-glutamate binding. Zn(2+) is bound by residues His644, Cys646, and Glu668. His697 acts as the Proton donor in catalysis. Position 729 (Cys729) interacts with Zn(2+).

Belongs to the vitamin-B12 independent methionine synthase family. Zn(2+) serves as cofactor.

The catalysed reaction is 5-methyltetrahydropteroyltri-L-glutamate + L-homocysteine = tetrahydropteroyltri-L-glutamate + L-methionine. The protein operates within amino-acid biosynthesis; L-methionine biosynthesis via de novo pathway; L-methionine from L-homocysteine (MetE route): step 1/1. In terms of biological role, catalyzes the transfer of a methyl group from 5-methyltetrahydrofolate to homocysteine resulting in methionine formation. The chain is 5-methyltetrahydropteroyltriglutamate--homocysteine methyltransferase from Yersinia pestis (strain Pestoides F).